The following is a 441-amino-acid chain: Squalene synthase (441 aa).

2 helical membrane passes run 293–313 (SFQF…LVFG) and 420–440 (FKFN…YWYA).

It belongs to the phytoene/squalene synthase family. Mg(2+) is required as a cofactor.

Its subcellular location is the endoplasmic reticulum membrane. The enzyme catalyses 2 (2E,6E)-farnesyl diphosphate + NADPH + H(+) = squalene + 2 diphosphate + NADP(+). It carries out the reaction 2 (2E,6E)-farnesyl diphosphate + NADH + H(+) = squalene + 2 diphosphate + NAD(+). The protein operates within terpene metabolism; lanosterol biosynthesis; lanosterol from farnesyl diphosphate: step 1/3. Functionally, catalyzes the condensation of 2 two farnesyl pyrophosphate moieties to form squalene. It is the first committed enzyme of the sterol biosynthesis pathway. Required for the biosynthesis of ergosterol. The chain is Squalene synthase (ERG9) from Eremothecium gossypii (strain ATCC 10895 / CBS 109.51 / FGSC 9923 / NRRL Y-1056) (Yeast).